A 324-amino-acid chain; its full sequence is Glutathione synthetase (324 aa).

One can recognise an ATP-grasp domain in the interval K133 to E317. V159–G215 provides a ligand contact to ATP. 2 residues coordinate Mg(2+): E288 and N290.

This sequence belongs to the prokaryotic GSH synthase family. Mg(2+) is required as a cofactor. Requires Mn(2+) as cofactor.

It carries out the reaction gamma-L-glutamyl-L-cysteine + glycine + ATP = glutathione + ADP + phosphate + H(+). The protein operates within sulfur metabolism; glutathione biosynthesis; glutathione from L-cysteine and L-glutamate: step 2/2. The polypeptide is Glutathione synthetase (Nostoc sp. (strain PCC 7120 / SAG 25.82 / UTEX 2576)).